The following is a 223-amino-acid chain: Transcriptional regulator HMO1 (223 aa).

2 disordered regions span residues 69 to 89 (IEAT…APKK) and 165 to 223 (DGSA…HGSP). Residues 70-86 (EATESKKKRKQEKDPNA) are compositionally biased toward basic and acidic residues. The HMG box DNA-binding region spans 87–160 (PKKPLTMFFQ…IYNIEKKKYE (74 aa)). Residues 204–223 (KKKKKTEKKEKKKKSGHGSP) show a composition bias toward basic residues.

The protein localises to the nucleus. Functionally, transcription factor that binds upstream of hexose and ergosterol metabolism, as well as cell cycle genes. Activates pseudohyphal growth. This chain is Transcriptional regulator HMO1 (HMO1), found in Candida albicans (strain SC5314 / ATCC MYA-2876) (Yeast).